Here is a 159-residue protein sequence, read N- to C-terminus: MNRVLYPGTFDPITKGHGDLVERASRLFDHVIIAVAASPKKNPLFPLEQRVALAREVTKHLPNVEVIGFSSLLAHFAKEQGANVFLRGLRAVSDFEYEFQLANMNRQLAPDVESLFLTPSERYSFISSTLVREIAALGGDITKFVHPVVADALTERFKK.

Thr9 is a substrate binding site. Residues 9-10 (TF) and His17 contribute to the ATP site. The substrate site is built by Lys41, Leu73, and Arg87. Residues 88–90 (GLR), Glu98, and 123–129 (YSFISST) each bind ATP.

This sequence belongs to the bacterial CoaD family. Homohexamer. Requires Mg(2+) as cofactor.

The protein localises to the cytoplasm. The catalysed reaction is (R)-4'-phosphopantetheine + ATP + H(+) = 3'-dephospho-CoA + diphosphate. The protein operates within cofactor biosynthesis; coenzyme A biosynthesis; CoA from (R)-pantothenate: step 4/5. Functionally, reversibly transfers an adenylyl group from ATP to 4'-phosphopantetheine, yielding dephospho-CoA (dPCoA) and pyrophosphate. The sequence is that of Phosphopantetheine adenylyltransferase from Pseudomonas putida (strain GB-1).